A 144-amino-acid polypeptide reads, in one-letter code: F420-non-reducing hydrogenase vhc iron-sulfur subunit D (144 aa).

This sequence belongs to the MvhD/VhuD family. In terms of assembly, the F420-non-reducing hydrogenase vhc is composed of three subunits; VhcA, VhcD and VhcG. It depends on [2Fe-2S] cluster as a cofactor.

The protein is F420-non-reducing hydrogenase vhc iron-sulfur subunit D (vhcD) of Methanococcus voltae.